We begin with the raw amino-acid sequence, 241 residues long: MPKSRRSKVLTLAQTEKKGHEGKAALFSGVQQSLDSFDYMWIFDVTNMRNTYLKRIRDDWKGSRIFMGKTKVMAKALGHTPEEEHAENVSKLTKLLHGAVGLLFTNSKPDEVIGYFESFVQNDFARAGAVAPFTHVIPAGPVYSRAGQIPVEDDILLTHTLEPQVRQLGMPTVLKNGVVTLLADFPLCTEGQQLDSRQTRLLKLFGITAAEFKVGLLGYYSKKGASVEFLQSAPGADEAME.

The protein belongs to the universal ribosomal protein uL10 family. In terms of assembly, associates with the pre-60S ribosomal particle.

It localises to the nucleus. It is found in the nucleolus. Its subcellular location is the cytoplasm. In terms of biological role, component of the ribosome assembly machinery. Nuclear paralog of the ribosomal protein P0, it binds pre-60S subunits at an early stage of assembly in the nucleolus, and is replaced by P0 in cytoplasmic pre-60S subunits and mature 80S ribosomes. This chain is Ribosome assembly factor mrt4, found in Schizosaccharomyces pombe (strain 972 / ATCC 24843) (Fission yeast).